We begin with the raw amino-acid sequence, 42 residues long: Kappa-actitoxin-Ael2a (42 aa).

Disulfide bonds link Cys4/Cys37, Cys6/Cys30, and Cys20/Cys38.

The protein belongs to the sea anemone type 3 (BDS) potassium channel toxin family.

Its subcellular location is the secreted. The protein resides in the nematocyst. Its function is as follows. Peptide with both antimicrobial and neurotoxin activities. This toxin acts both on ERG potassium channels and sodium channels. It potently and reversibly inhibits human Kv11.1/KCNH2/ERG1 (IC(50)=34 nM), rat Kv11.1/KCNH2/ERG1 and Kv11.3/KCNH7/ERG3 voltage-gated potassium channels in a similar potency. It acts as a gating-modifier toxin that shifts the voltage-dependence of ERG activation in the positive direction and suppresses its current amplitudes elicited by strong depolarizing pulses. On sodium channels, it blocks Nav1.2/SCN2A (EC(50)=31 nM), Nav1.3/SCN3A, Nav1.4/SCN4A, Nav1.5/SCN5A, Nav1.6/SCN8A, Nav1.8/SCN10A (EC(50)=92 nM). It may act by binding at site 1 or close by, only when the pore is in an open configuration. Shows antibacterial activity against the Gram-negative bacterium S.typhimurium, but not on the bacteria B.subtilis, S.aureus, and P.aeruginosa. In vivo, this toxin does not induce neurotoxic symptoms when injected into mice. This chain is Kappa-actitoxin-Ael2a, found in Anthopleura elegantissima (Green aggregating anemone).